The sequence spans 323 residues: tRNA U34 carboxymethyltransferase (323 aa).

Carboxy-S-adenosyl-L-methionine-binding positions include K91, W105, K110, G130, 181-182 (IE), M196, Y200, and R315.

The protein belongs to the class I-like SAM-binding methyltransferase superfamily. CmoB family. In terms of assembly, homotetramer.

It catalyses the reaction carboxy-S-adenosyl-L-methionine + 5-hydroxyuridine(34) in tRNA = 5-carboxymethoxyuridine(34) in tRNA + S-adenosyl-L-homocysteine + H(+). In terms of biological role, catalyzes carboxymethyl transfer from carboxy-S-adenosyl-L-methionine (Cx-SAM) to 5-hydroxyuridine (ho5U) to form 5-carboxymethoxyuridine (cmo5U) at position 34 in tRNAs. In Edwardsiella ictaluri (strain 93-146), this protein is tRNA U34 carboxymethyltransferase.